We begin with the raw amino-acid sequence, 901 residues long: Protein translocase subunit SecA (901 aa).

ATP contacts are provided by residues Gln87, 105-109 (GEGKT), and Asp512. The tract at residues 853–901 (QMQQLSHQTDENEAAEAIAAQTGDRKVGRNDPCPCGSGKKYKSCHGRLS) is disordered. 4 residues coordinate Zn(2+): Cys885, Cys887, Cys896, and His897. The segment covering 891–901 (KKYKSCHGRLS) has biased composition (basic residues).

It belongs to the SecA family. Monomer and homodimer. Part of the essential Sec protein translocation apparatus which comprises SecA, SecYEG and auxiliary proteins SecDF-YajC and YidC. Zn(2+) serves as cofactor.

Its subcellular location is the cell inner membrane. The protein localises to the cytoplasm. The catalysed reaction is ATP + H2O + cellular proteinSide 1 = ADP + phosphate + cellular proteinSide 2.. Functionally, part of the Sec protein translocase complex. Interacts with the SecYEG preprotein conducting channel. Has a central role in coupling the hydrolysis of ATP to the transfer of proteins into and across the cell membrane, serving both as a receptor for the preprotein-SecB complex and as an ATP-driven molecular motor driving the stepwise translocation of polypeptide chains across the membrane. This is Protein translocase subunit SecA from Enterobacter sp. (strain 638).